Reading from the N-terminus, the 564-residue chain is MFS-type transporter kojT (564 aa).

N-linked (GlcNAc...) asparagine glycosylation is present at N113. Helical transmembrane passes span 120–140 (WATL…SSID), 159–179 (SLAT…AAPF), 187–207 (PVYI…GLAP), 217–237 (FLAG…MADI), 249–269 (VCCT…AFIG), 278–298 (WTEW…FLFV), 353–373 (IMVA…FGFL), 389–409 (GSVG…FAMV), 437–457 (LWFA…MGWT), 462–482 (ISYW…QGIF), 500–520 (ALVS…IVSI), and 530–550 (WSLT…YIFY).

Belongs to the major facilitator superfamily.

The protein localises to the cell membrane. Its function is as follows. MFS-type transporter; part of the gene cluster that mediates the biosynthesis of 5-hydroxy-2-hydroxymethyl-1,4-pyrone, also know as kojic acid, a by-product in the fermentation process of malting rice that acts as a chelation agent. Involved in the seretion of kojic acid. The polypeptide is MFS-type transporter kojT (Aspergillus flavus (strain ATCC 200026 / FGSC A1120 / IAM 13836 / NRRL 3357 / JCM 12722 / SRRC 167)).